The primary structure comprises 376 residues: MAKRDYYEVLGVKKDADEREIKKAYKRLAVKYHPDRNQDENDTGENFKEVKEAYEILTDPQKRAAYDQYGHAAFEQGGMGGGGFGGGGADFTDIFGDVFGDIFGGGRRQRASRGSDLRYNMDLTLEEAVRGVTKEIRIPTLNECDVCHGSGAKPGSSPVTCSTCRGAGQVHMRQGFFTVQQACPTCHGSGQIIKDPCNKCHGHGRVEKSKTLSVKIPAGVDTGDRIRLSGEGEAGEHGAPAGDLYVQVQVKAHPIFEREGNNLYCEVPINFAMAALGGEIEVPTLDGRVKLKVPAETQTGKLFRMRGKGVKSVRGGSQGDLLCRVVVETPVHLSEKQKQLLRELEESFVGAAGEKNSPRSKSFLDGVKKFFDDLTR.

In terms of domain architecture, J spans 5–70 (DYYEVLGVKK…QKRAAYDQYG (66 aa)). Residues 131–209 (GVTKEIRIPT…CHGHGRVEKS (79 aa)) form a CR-type zinc finger. The Zn(2+) site is built by C144, C147, C161, C164, C183, C186, C197, and C200. 4 CXXCXGXG motif repeats span residues 144-151 (CDVCHGSG), 161-168 (CSTCRGAG), 183-190 (CPTCHGSG), and 197-204 (CNKCHGHG).

Belongs to the DnaJ family. As to quaternary structure, homodimer. Zn(2+) serves as cofactor.

The protein resides in the cytoplasm. Its function is as follows. Participates actively in the response to hyperosmotic and heat shock by preventing the aggregation of stress-denatured proteins and by disaggregating proteins, also in an autonomous, DnaK-independent fashion. Unfolded proteins bind initially to DnaJ; upon interaction with the DnaJ-bound protein, DnaK hydrolyzes its bound ATP, resulting in the formation of a stable complex. GrpE releases ADP from DnaK; ATP binding to DnaK triggers the release of the substrate protein, thus completing the reaction cycle. Several rounds of ATP-dependent interactions between DnaJ, DnaK and GrpE are required for fully efficient folding. Also involved, together with DnaK and GrpE, in the DNA replication of plasmids through activation of initiation proteins. This Yersinia enterocolitica serotype O:8 / biotype 1B (strain NCTC 13174 / 8081) protein is Chaperone protein DnaJ.